The primary structure comprises 494 residues: Lysine--tRNA ligase (494 aa).

Residues glutamate 407 and glutamate 414 each coordinate Mg(2+).

The protein belongs to the class-II aminoacyl-tRNA synthetase family. Homodimer. The cofactor is Mg(2+).

It localises to the cytoplasm. The catalysed reaction is tRNA(Lys) + L-lysine + ATP = L-lysyl-tRNA(Lys) + AMP + diphosphate. The sequence is that of Lysine--tRNA ligase from Lactococcus lactis subsp. cremoris (strain SK11).